Here is a 504-residue protein sequence, read N- to C-terminus: Cytochrome P450 monooxygenase gsfF (504 aa).

The signal sequence occupies residues 1–16 (MTVLFILSAGLVAVFG). N-linked (GlcNAc...) asparagine glycans are attached at residues N97 and N150. C450 is a heme binding site.

It belongs to the cytochrome P450 family. The cofactor is heme.

It catalyses the reaction griseophenone B + reduced [NADPH--hemoprotein reductase] + O2 + H(+) = desmethyl-dehydrogriseofulvin + oxidized [NADPH--hemoprotein reductase] + 2 H2O. The protein operates within secondary metabolite biosynthesis; terpenoid biosynthesis. Cytochrome P450 monooxygenase; part of the gene cluster that mediates the biosynthesis of griseofulvin, an important antifungal drug that has been in use for a long time for treating dermatophyte infections. The first step of the pathway is the formation of the heptaketide backbone by gsfA which is initiated by priming with acetyl-CoA, followed by sequential condensations of 6 malonyl-CoA units. The resulting benzophenone can undergo a spontaneous dehydration to form norlichexanthone. However, the true precursor for the griseofulvin biosynthesis is not norlichexanthone, but the heptaketide benzophenone that is O-methylated at 3-OH by gsfB to produce griseophenone D which is further methylated at 9-OH by gsfC to yield griseophenone C. Griseophenone C is then substrate of halogenase gsfI which is responsible for the regio-specific chlorination at the C13 position to form griseophenone B. The cytochrome P450 gsfF catalyzes the coupling of orcinol and phloroglucinol rings in griseophenone B to form desmethyl-dehydrogriseofulvin A which is further methylated at 5-OH by gsfD to yield dehydrogriseofulvin. Finally, gsfE performs stereospecific reduction of enone 18 of dehydrogriseofulvin to afford the final product griseofulvin. This is Cytochrome P450 monooxygenase gsfF from Penicillium aethiopicum.